We begin with the raw amino-acid sequence, 344 residues long: Selenide, water dikinase (344 aa).

Cysteine 16 is a catalytic residue. Residues lysine 19 and 47-49 (SRD) contribute to the ATP site. Aspartate 50 is a Mg(2+) binding site. Residues aspartate 67, aspartate 90, and 138 to 140 (GHS) contribute to the ATP site. Aspartate 90 is a binding site for Mg(2+). Mg(2+) is bound at residue aspartate 226.

Belongs to the selenophosphate synthase 1 family. Class I subfamily. Homodimer. It depends on Mg(2+) as a cofactor.

It carries out the reaction hydrogenselenide + ATP + H2O = selenophosphate + AMP + phosphate + 2 H(+). Synthesizes selenophosphate from selenide and ATP. This is Selenide, water dikinase from Pseudomonas aeruginosa (strain ATCC 15692 / DSM 22644 / CIP 104116 / JCM 14847 / LMG 12228 / 1C / PRS 101 / PAO1).